A 153-amino-acid chain; its full sequence is Endoribonuclease YbeY (153 aa).

Zn(2+) is bound by residues H113, H117, and H123.

This sequence belongs to the endoribonuclease YbeY family. Zn(2+) is required as a cofactor.

Its subcellular location is the cytoplasm. Its function is as follows. Single strand-specific metallo-endoribonuclease involved in late-stage 70S ribosome quality control and in maturation of the 3' terminus of the 16S rRNA. The sequence is that of Endoribonuclease YbeY from Aliivibrio fischeri (strain ATCC 700601 / ES114) (Vibrio fischeri).